The chain runs to 340 residues: Tartrate-resistant acid phosphatase type 5 (340 aa).

Positions 1–20 are cleaved as a signal peptide; the sequence is MDTWTVLLILQASLVLPGAV. Positions 41, 79, 82, and 118 each coordinate Fe cation. N-linked (GlcNAc...) asparagine glycans are attached at residues Asn124 and Asn155. Cysteines 169 and 227 form a disulfide. His213, His248, and His250 together coordinate Fe cation.

Requires Fe cation as cofactor.

It is found in the secreted. The enzyme catalyses a phosphate monoester + H2O = an alcohol + phosphate. Functionally, uteroferrin is a phosphoprotein phosphatase, synthesized in response to progesterone. It appears to function in transplacental transport of iron in pig. The sequence is that of Tartrate-resistant acid phosphatase type 5 (ACP5) from Sus scrofa (Pig).